The following is a 155-amino-acid chain: Putative pre-16S rRNA nuclease (155 aa).

This sequence belongs to the YqgF nuclease family.

It localises to the cytoplasm. Functionally, could be a nuclease involved in processing of the 5'-end of pre-16S rRNA. The chain is Putative pre-16S rRNA nuclease from Paramagnetospirillum magneticum (strain ATCC 700264 / AMB-1) (Magnetospirillum magneticum).